The following is a 106-amino-acid chain: Iron-sulfur cluster assembly protein CyaY (106 aa).

This sequence belongs to the frataxin family.

Its function is as follows. Involved in iron-sulfur (Fe-S) cluster assembly. May act as a regulator of Fe-S biogenesis. The polypeptide is Iron-sulfur cluster assembly protein CyaY (Citrobacter koseri (strain ATCC BAA-895 / CDC 4225-83 / SGSC4696)).